A 218-amino-acid chain; its full sequence is Glutathione S-transferase (218 aa).

One can recognise a GST N-terminal domain in the interval 3 to 88; the sequence is SKPVLGYWDI…YIGRKYKLTG (86 aa). Residues 9–10, 43–46, Lys50, 59–60, and 72–73 each bind glutathione; these read YW, RSAW, NL, and QT. The GST C-terminal domain maps to 90-206; that stretch reads NEPEELRVSL…YIKAQQPKLF (117 aa). Tyr116 is a substrate binding site.

The protein belongs to the GST superfamily. Mu family.

The catalysed reaction is RX + glutathione = an S-substituted glutathione + a halide anion + H(+). Its function is as follows. Conjugation of reduced glutathione to a wide number of exogenous and endogenous hydrophobic electrophiles. This is Glutathione S-transferase from Tyrophagus putrescentiae (Mold mite).